The sequence spans 662 residues: UvrABC system protein B (662 aa).

The Helicase ATP-binding domain maps to 25–411; the sequence is DGIIAGDKFQ…STRIVEQVIR (387 aa). 38–45 is an ATP binding site; that stretch reads GVTGSGKT. Positions 91–114 match the Beta-hairpin motif; the sequence is YYDYYQPEAYVPARDLYIEKDASI. Residues 428-594 form the Helicase C-terminal domain; the sequence is QMEHIYGEVK…TIKKAIEDIL (167 aa). The region spanning 625–660 is the UVR domain; the sequence is KKLIKKLEAQMAEYADMLMFEEAAVIRDKIEEVKRI.

The protein belongs to the UvrB family. In terms of assembly, forms a heterotetramer with UvrA during the search for lesions. Interacts with UvrC in an incision complex.

The protein resides in the cytoplasm. The UvrABC repair system catalyzes the recognition and processing of DNA lesions. A damage recognition complex composed of 2 UvrA and 2 UvrB subunits scans DNA for abnormalities. Upon binding of the UvrA(2)B(2) complex to a putative damaged site, the DNA wraps around one UvrB monomer. DNA wrap is dependent on ATP binding by UvrB and probably causes local melting of the DNA helix, facilitating insertion of UvrB beta-hairpin between the DNA strands. Then UvrB probes one DNA strand for the presence of a lesion. If a lesion is found the UvrA subunits dissociate and the UvrB-DNA preincision complex is formed. This complex is subsequently bound by UvrC and the second UvrB is released. If no lesion is found, the DNA wraps around the other UvrB subunit that will check the other stand for damage. This chain is UvrABC system protein B, found in Treponema denticola (strain ATCC 35405 / DSM 14222 / CIP 103919 / JCM 8153 / KCTC 15104).